An 838-amino-acid polypeptide reads, in one-letter code: MSVYCELVDVVQQIRYKTQIFYETFKRDSIAEQIYNFSNESTSEIDPDIPFSKSLDKDYSLLYRPVSTSNNNATSGNSTPPNNAISPNQQQQQQQQAQQQQQQQQQQQQQQQHQQQQQQQQQQQQQQQQQQQQQQAQQQQQQAQQQAQVQAQQQQQKPTTATTASTVTTTPQQQPSPNNTTSSCTSSSSGSSSGTTNTTSNTTTSTNTSTVTSATNSSTISSLTSTNASTSSAYSTDQQKPNQPPQQPQNISQPQNISQQQNTNNVQQNNQQQQQQQQQQQQQQTSTSPKKCKIVTFTGTSVKLNSKTLQKSDKTSEKENKQQQPDSSKTQQQQQAQQQQSQQQQQAQQQQQQQQQQQQQQQQQQQQQQQQQQQQQQQPVFIFVKEKVNKVNHDLPITPPPSLLTRLVKPNSEEAEYGDIVPPPGMGLTLSIHTGNTGAGQLKVRVIEKATIIQTIFATLKLHHNNGGTGLIPDPKAYNLRIADSNGRIDQDFPPLDPNQYITKFKDEVLVLCPNPKFDLKKSSSSLSISGGVPQQNNNNSVNSNSSNNSNSSNNNMKSSGFQPQQSQQQQQQTQQTQQTQQQAQQAPQQQQSQQQQQQQQQHPQQIQQQLSSNQLQPDQVGGGGGGGGGNFHRTHHRNVSSGPDAPLVVKITLPDSSITKVVFQKTMLLKDLLESTCKKRKLLISDHYFTLENGQTCNGTLPMEKLGGADLILVSRRPIEQMTALSPTDTDSTGSSSDLQQDIFWYDALAWQYKTYEVTKTKKYGPKQDRIIGIDRERVTNMSPKDTETKRPARLIKDISKVALLEKPKYFTIEYNDGKSYIYEAKTTSLANNYLCK.

Disordered stretches follow at residues 66 to 97 (VSTSNNNATSGNSTPPNNAISPNQQQQQQQQA), 157 to 290 (KPTT…TSPK), and 305 to 336 (NSKTLQKSDKTSEKENKQQQPDSSKTQQQQQA). Composition is skewed to low complexity over residues 67-97 (STSNNNATSGNSTPPNNAISPNQQQQQQQQA), 157-241 (KPTT…QQKP), and 248-284 (PQNISQPQNISQQQNTNNVQQNNQQQQQQQQQQQQQQ). The span at 310–321 (QKSDKTSEKENK) shows a compositional bias: basic and acidic residues. The CRIM domain occupies 441–515 (QLKVRVIEKA…KDEVLVLCPN (75 aa)). Disordered regions lie at residues 522 to 581 (KSSS…QQTQ) and 594 to 646 (QQQQ…GPDA). 3 stretches are compositionally biased toward low complexity: residues 537-556 (NNNNSVNSNSSNNSNSSNNN), 563-581 (QPQQSQQQQQQTQQTQQTQ), and 594-620 (QQQQQQQQQHPQQIQQQLSSNQLQPDQ). The segment covering 621–631 (VGGGGGGGGGN) has biased composition (gly residues). An RBD domain is found at 648–717 (LVVKITLPDS…GGADLILVSR (70 aa)).

The protein belongs to the SIN1 family. As to quaternary structure, interacts with activated RasG. Part of a complex, TORC2, consisting of tor, lst8, piaA and ripA. Additional proteins, such as 14-3-3 and heat-shock proteins, may also belong to the TORC2 complex.

In terms of biological role, component of a Ras-regulated pathway involved in integrating chemotaxis and signal relay pathways that are essential for aggregation. This is Ras-interacting protein RIP3 (ripA) from Dictyostelium discoideum (Social amoeba).